A 447-amino-acid polypeptide reads, in one-letter code: Probable asparagine--tRNA ligase, cytoplasmic (447 aa).

The protein belongs to the class-II aminoacyl-tRNA synthetase family.

The protein resides in the cytoplasm. The catalysed reaction is tRNA(Asn) + L-asparagine + ATP = L-asparaginyl-tRNA(Asn) + AMP + diphosphate + H(+). This is Probable asparagine--tRNA ligase, cytoplasmic from Vairimorpha ceranae (strain BRL01) (Microsporidian parasite).